The sequence spans 396 residues: Elongation factor Tu (396 aa).

The region spanning K11–E205 is the tr-type G domain. The tract at residues G20–T27 is G1. Residue G20–T27 participates in GTP binding. Residue T27 participates in Mg(2+) binding. The interval G61–N65 is G2. The interval D82 to G85 is G3. GTP contacts are provided by residues D82 to H86 and N137 to D140. The segment at N137–D140 is G4. A G5 region spans residues S175–L177.

It belongs to the TRAFAC class translation factor GTPase superfamily. Classic translation factor GTPase family. EF-Tu/EF-1A subfamily. As to quaternary structure, monomer.

Its subcellular location is the cytoplasm. It catalyses the reaction GTP + H2O = GDP + phosphate + H(+). Its function is as follows. GTP hydrolase that promotes the GTP-dependent binding of aminoacyl-tRNA to the A-site of ribosomes during protein biosynthesis. This is Elongation factor Tu from Lactobacillus acidophilus (strain ATCC 700396 / NCK56 / N2 / NCFM).